The primary structure comprises 325 residues: Zinc metalloproteinase/disintegrin (325 aa).

A propeptide spanning residues 1 to 39 (KYENVEKGDEAPKKCGVTHTNLESDEPIEKASQLFGTSE) is cleaved from the precursor. A Pyrrolidone carboxylic acid modification is found at Gln40. The Peptidase M12B domain maps to 46–242 (RHIELVIVAD…HNPQRILNEP (197 aa)). His182 serves as a coordination point for Zn(2+). Residue Glu183 is part of the active site. Residues His186 and His192 each coordinate Zn(2+). Intrachain disulfides connect Cys197/Cys221 and Cys199/Cys204. The propeptide occupies 243–257 (LRTDTVSTPVYGNVL). One can recognise a Disintegrin domain in the interval 250–322 (TPVYGNVLQN…SECESNPWNF (73 aa)). At Gln258 the chain carries Pyrrolidone carboxylic acid. 4 cysteine pairs are disulfide-bonded: Cys264–Cys287, Cys278–Cys284, Cys283–Cys308, and Cys296–Cys315. Positions 300-302 (RGD) match the Cell attachment site motif.

This sequence belongs to the venom metalloproteinase (M12B) family. P-II subfamily. P-IIe sub-subfamily. Heterodimer of bitisgabonin and gabonin-1 (bitisgabonin-1) or gabonin-2 (bitisgabonin-2); disulfide-linked. Zn(2+) serves as cofactor. As to expression, expressed by the venom gland.

It localises to the secreted. Functionally, impairs hemostasis in the envenomed animal. In terms of biological role, in dimer with gabonin-1 (bitisgabonin-1), is a potent inhibitor of the adhesion of the RGD-dependent integrin alpha-5/beta-1 (ITGA5/ITGB1) to immobilized fibronectin. Its function is as follows. In dimer with gabonin-2 (bitisgabonin-2), preferentially inhibits the adhesion of the alpha-4/beta-1 (ITGA4/ITGB1) and alpha-9/beta-1 (ITGA9/ITGB1) integrins to VCAM-1 and also acts as a strong antagonist of alpha-5/beta-1 (ITGA5/ITGB1). The polypeptide is Zinc metalloproteinase/disintegrin (Bitis gabonica (Gaboon adder)).